We begin with the raw amino-acid sequence, 97 residues long: uncharacterized protein (97 aa).

Positions 1–16 (MKQTVLLLFTALFLSG) are cleaved as a signal peptide. Cysteine 17 is lipidated: N-palmitoyl cysteine. Residue cysteine 17 is the site of S-diacylglycerol cysteine attachment.

It is found in the cell membrane. This is an uncharacterized protein from Bacillus subtilis (strain 168).